A 295-amino-acid chain; its full sequence is Homeobox protein XHOX-7.1 (295 aa).

2 disordered regions span residues 75–115 (RKPG…PISL) and 134–175 (KPES…KPRT). Positions 84–97 (SSPTGSPLAGTSHS) are enriched in polar residues. The segment covering 141-153 (SSWIQSPSFSPSP) has biased composition (low complexity). Residues 164–174 (LRKHKTNRKPR) are compositionally biased toward basic residues. Positions 170–229 (NRKPRTPFTTSQLLALERKFRQKQYLSIAERAEFSSSLNLTETQVKIWFQNRRAKAKRLQ) form a DNA-binding region, homeobox.

Belongs to the Msh homeobox family.

It is found in the nucleus. This chain is Homeobox protein XHOX-7.1, found in Xenopus laevis (African clawed frog).